The chain runs to 96 residues: Co-chaperonin GroES (96 aa).

The protein belongs to the GroES chaperonin family. As to quaternary structure, heptamer of 7 subunits arranged in a ring. Interacts with the chaperonin GroEL.

Its subcellular location is the cytoplasm. In terms of biological role, together with the chaperonin GroEL, plays an essential role in assisting protein folding. The GroEL-GroES system forms a nano-cage that allows encapsulation of the non-native substrate proteins and provides a physical environment optimized to promote and accelerate protein folding. GroES binds to the apical surface of the GroEL ring, thereby capping the opening of the GroEL channel. The protein is Co-chaperonin GroES of Leptospira borgpetersenii serovar Hardjo-bovis (strain JB197).